A 61-amino-acid chain; its full sequence is DNA-directed RNA polymerase subunit 12-like protein (61 aa).

Positions 21, 24, 38, and 41 each coordinate Zn(2+).

Belongs to the archaeal Rpo12/eukaryotic RPC10 RNA polymerase subunit family.

Its subcellular location is the nucleus. This Arabidopsis thaliana (Mouse-ear cress) protein is DNA-directed RNA polymerase subunit 12-like protein (NRPB12L).